A 642-amino-acid polypeptide reads, in one-letter code: Threonine--tRNA ligase (642 aa).

In terms of domain architecture, TGS spans 1-61; that stretch reads MPVITLPDGS…ESDAQLAIIT (61 aa). Residues 243 to 534 are catalytic; it reads DHRKIGKQLD…LTEEYAGFYP (292 aa). Zn(2+)-binding residues include C334, H385, and H511.

The protein belongs to the class-II aminoacyl-tRNA synthetase family. Homodimer. The cofactor is Zn(2+).

The protein localises to the cytoplasm. It catalyses the reaction tRNA(Thr) + L-threonine + ATP = L-threonyl-tRNA(Thr) + AMP + diphosphate + H(+). Functionally, catalyzes the attachment of threonine to tRNA(Thr) in a two-step reaction: L-threonine is first activated by ATP to form Thr-AMP and then transferred to the acceptor end of tRNA(Thr). Also edits incorrectly charged L-seryl-tRNA(Thr). The sequence is that of Threonine--tRNA ligase from Serratia proteamaculans (strain 568).